Here is a 698-residue protein sequence, read N- to C-terminus: Protein CRAC (698 aa).

In terms of domain architecture, PH spans 22–122; it reads DVSYSSIMKK…FLTLLIARIR (101 aa). The tract at residues 594–630 is disordered; sequence TGGGSVPSSQSTNNLQSSTSSMSSLSSSSTSTTKRSH. Over residues 601 to 626 the composition is skewed to low complexity; sequence SSQSTNNLQSSTSSMSSLSSSSTSTT.

The protein localises to the cytoplasm. Functionally, couples activated G protein to adenylyl cyclase signal transduction from surface cAMP receptor. Pianissimo a cytosolic regulator and CRAC, are both essential for activation of the enzyme adenylyl cyclase. Pianissimo and CRAC do not function redundantly. Both proteins are integral components of the adenylyl cyclase activation pathway. In Dictyostelium discoideum (Social amoeba), this protein is Protein CRAC (dagA).